The following is a 463-amino-acid chain: Glutamate--tRNA ligase 2 (463 aa).

Positions 11–21 match the 'HIGH' region motif; sequence PSPTGYLHIGG. A 'KMSKS' region motif is present at residues 240–244; sequence KLSKR. K243 serves as a coordination point for ATP.

Belongs to the class-I aminoacyl-tRNA synthetase family. Glutamate--tRNA ligase type 1 subfamily. Monomer.

It is found in the cytoplasm. It carries out the reaction tRNA(Glu) + L-glutamate + ATP = L-glutamyl-tRNA(Glu) + AMP + diphosphate. In terms of biological role, catalyzes the attachment of glutamate to tRNA(Glu) in a two-step reaction: glutamate is first activated by ATP to form Glu-AMP and then transferred to the acceptor end of tRNA(Glu). The chain is Glutamate--tRNA ligase 2 from Campylobacter jejuni (strain RM1221).